The sequence spans 404 residues: Diaminopropionate ammonia-lyase (404 aa).

K78 carries the N6-(pyridoxal phosphate)lysine modification.

Belongs to the diaminopropionate ammonia-lyase family. Homodimer. The cofactor is pyridoxal 5'-phosphate.

The catalysed reaction is (S)-2,3-diaminopropanoate + H2O + H(+) = pyruvate + 2 NH4(+). It carries out the reaction (R)-2,3-diaminopropanoate + H2O + H(+) = pyruvate + 2 NH4(+). Competitively inhibited by L- and D-alanine. Catalyzes the alpha,beta-elimination reaction of both L- and D-alpha,beta-diaminopropionate (DAP) to form pyruvate and ammonia. In vitro L- and D-isomers of serine are also degraded, though slowly; it is the only serine dehydratase which can eliminate an amino group at the beta-carbon position. In vivo L-, D- and a mixure of DL-DAP allow growth. DL-DAP is toxic in the absence of this enzyme, it may inhibit enzymes involved in the synthesis of pyruvate and aspartate, as well as amino acids derived from them. This Salmonella typhimurium (strain LT2 / SGSC1412 / ATCC 700720) protein is Diaminopropionate ammonia-lyase (dpaL).